A 266-amino-acid chain; its full sequence is Non-structural maintenance of chromosomes element 1 homolog (266 aa).

The interaction with NSMCE3 stretch occupies residues 1-102 (MQGSTRRAGA…SVSKMATDFA (102 aa)). The RING-type; atypical zinc-finger motif lies at 191-232 (CNICHSLLIQGQSCETCGIRMHLPCVAKYFQSTAEPRCPHCN). Residues 246-266 (EKEREAGISKSSRKSLRTRQH) form a disordered region. A compositionally biased stretch (basic residues) spans 256–266 (SSRKSLRTRQH).

This sequence belongs to the NSE1 family. As to quaternary structure, component of the SMC5-SMC6 complex which consists at least of SMC5, SMC6, NSMCE2, NSMCE1, NSMCE4A or EID3 and NSMCE3. NSMCE1, NSMCE4A or EID3 and NSMCE3 probably form a subcomplex that bridges the head domains of the SMC5-SMC6 heterodimer. Interacts with NSMCE3. Post-translationally, ubiquitinated.

It localises to the nucleus. Its subcellular location is the chromosome. It is found in the telomere. It catalyses the reaction S-ubiquitinyl-[E2 ubiquitin-conjugating enzyme]-L-cysteine + [acceptor protein]-L-lysine = [E2 ubiquitin-conjugating enzyme]-L-cysteine + N(6)-ubiquitinyl-[acceptor protein]-L-lysine.. In terms of biological role, RING-type zinc finger-containing E3 ubiquitin ligase that assembles with melanoma antigen protein (MAGE) to catalyze the direct transfer of ubiquitin from E2 ubiquitin-conjugating enzyme to a specific substrate. Within MAGE-RING ubiquitin ligase complex, MAGE stimulates and specifies ubiquitin ligase activity likely through recruitment and/or stabilization of the E2 ubiquitin-conjugating enzyme at the E3:substrate complex. Involved in maintenance of genome integrity, DNA damage response and DNA repair. NSMCE3/MAGEG1 and NSMCE1 ubiquitin ligase are components of SMC5-SMC6 complex and may positively regulate homologous recombination-mediated DNA repair. This Rattus norvegicus (Rat) protein is Non-structural maintenance of chromosomes element 1 homolog (Nsmce1).